The sequence spans 77 residues: Conotoxin Mr8.2 (77 aa).

The first 16 residues, 1–16 (MLRLITAAVLVSACLA), serve as a signal peptide directing secretion. Positions 17–32 (YPQKKRTPPQTRPTSR) are excised as a propeptide.

It belongs to the conotoxin B2 family. Post-translationally, contains 5 disulfide bonds. In terms of tissue distribution, expressed by the venom duct.

The protein localises to the secreted. This chain is Conotoxin Mr8.2, found in Conus marmoreus (Marble cone).